A 119-amino-acid chain; its full sequence is Ribonuclease P protein component (119 aa).

It belongs to the RnpA family. In terms of assembly, consists of a catalytic RNA component (M1 or rnpB) and a protein subunit.

It carries out the reaction Endonucleolytic cleavage of RNA, removing 5'-extranucleotides from tRNA precursor.. RNaseP catalyzes the removal of the 5'-leader sequence from pre-tRNA to produce the mature 5'-terminus. It can also cleave other RNA substrates such as 4.5S RNA. The protein component plays an auxiliary but essential role in vivo by binding to the 5'-leader sequence and broadening the substrate specificity of the ribozyme. In Pasteurella multocida (strain Pm70), this protein is Ribonuclease P protein component.